A 211-amino-acid chain; its full sequence is Arginine exporter protein ArgO (211 aa).

6 helical membrane passes run 1-21, 37-57, 68-88, 111-131, 147-167, and 179-199; these read MISY…PLGP, LMIA…GIFG, LLAL…FGAL, IIAT…DTFV, WFAL…ALLA, and AQRI…FQLA.

This sequence belongs to the LysE/ArgO transporter (TC 2.A.75) family.

It is found in the cell inner membrane. It carries out the reaction L-arginine(in) = L-arginine(out). Functionally, involved in the export of arginine. Important to control the intracellular level of arginine and the correct balance between arginine and lysine. The polypeptide is Arginine exporter protein ArgO (Salmonella paratyphi A (strain ATCC 9150 / SARB42)).